The chain runs to 315 residues: Acetaldehyde dehydrogenase 2 (315 aa).

15–18 provides a ligand contact to NAD(+); it reads SGNI. Catalysis depends on Cys-135, which acts as the Acyl-thioester intermediate. NAD(+) is bound by residues 166–174 and Asn-293; that span reads SAGPGTRAN.

The protein belongs to the acetaldehyde dehydrogenase family.

It catalyses the reaction acetaldehyde + NAD(+) + CoA = acetyl-CoA + NADH + H(+). The polypeptide is Acetaldehyde dehydrogenase 2 (Paraburkholderia phymatum (strain DSM 17167 / CIP 108236 / LMG 21445 / STM815) (Burkholderia phymatum)).